Here is a 115-residue protein sequence, read N- to C-terminus: Large ribosomal subunit protein bL19 (115 aa).

It belongs to the bacterial ribosomal protein bL19 family.

This protein is located at the 30S-50S ribosomal subunit interface and may play a role in the structure and function of the aminoacyl-tRNA binding site. This Latilactobacillus sakei subsp. sakei (strain 23K) (Lactobacillus sakei subsp. sakei) protein is Large ribosomal subunit protein bL19.